The sequence spans 176 residues: Nicotinamide-nucleotide adenylyltransferase (176 aa).

The protein belongs to the archaeal NMN adenylyltransferase family.

It is found in the cytoplasm. It catalyses the reaction beta-nicotinamide D-ribonucleotide + ATP + H(+) = diphosphate + NAD(+). It functions in the pathway cofactor biosynthesis; NAD(+) biosynthesis; NAD(+) from nicotinamide D-ribonucleotide: step 1/1. The chain is Nicotinamide-nucleotide adenylyltransferase from Halorubrum lacusprofundi (strain ATCC 49239 / DSM 5036 / JCM 8891 / ACAM 34).